Consider the following 423-residue polypeptide: UDP-N-acetylglucosamine 1-carboxyvinyltransferase 1 (423 aa).

A phosphoenolpyruvate-binding site is contributed by K23 to N24. R96 provides a ligand contact to UDP-N-acetyl-alpha-D-glucosamine. The Proton donor role is filled by C120. The residue at position 120 (C120) is a 2-(S-cysteinyl)pyruvic acid O-phosphothioketal. UDP-N-acetyl-alpha-D-glucosamine contacts are provided by residues R125 to L129, D309, and V331.

The protein belongs to the EPSP synthase family. MurA subfamily.

The protein localises to the cytoplasm. The enzyme catalyses phosphoenolpyruvate + UDP-N-acetyl-alpha-D-glucosamine = UDP-N-acetyl-3-O-(1-carboxyvinyl)-alpha-D-glucosamine + phosphate. The protein operates within cell wall biogenesis; peptidoglycan biosynthesis. Functionally, cell wall formation. Adds enolpyruvyl to UDP-N-acetylglucosamine. The sequence is that of UDP-N-acetylglucosamine 1-carboxyvinyltransferase 1 from Streptococcus mutans serotype c (strain ATCC 700610 / UA159).